A 210-amino-acid chain; its full sequence is DNA dC-&gt;dU-editing enzyme APOBEC-3H (210 aa).

Positions 4–126 (LTAKTFSLQF…PNYQEGLLLL (123 aa)) constitute a CMP/dCMP-type deaminase domain. His54 is a Zn(2+) binding site. Residue Glu56 is the Proton donor of the active site. The Zn(2+) site is built by Cys85 and Cys88. Residues 182–210 (SRSVDVLENGLRSLQLGPVTPSSSIRNSR) are necessary and sufficient for localization to the cytoplasm.

The protein belongs to the cytidine and deoxycytidylate deaminase family. As to quaternary structure, homodimer. It depends on Zn(2+) as a cofactor.

The protein localises to the cytoplasm. The catalysed reaction is a 2'-deoxycytidine in single-stranded DNA + H2O + H(+) = a 2'-deoxyuridine in single-stranded DNA + NH4(+). Its activity is regulated as follows. Antiviral activity is neutralized by the simian immunodeficiency virus rhesus (SIV-mac) virion infectivity factor (VIF). Its function is as follows. DNA deaminase (cytidine deaminase) which acts as an inhibitor of retrovirus replication and retrotransposon mobility via deaminase-dependent and -independent mechanisms. Exhibits antiviral activity against vif-deficient HIV-1. After the penetration of retroviral nucleocapsids into target cells of infection and the initiation of reverse transcription, it can induce the conversion of cytosine to uracil in the minus-sense single-strand viral DNA, leading to G-to-A hypermutations in the subsequent plus-strand viral DNA. The resultant detrimental levels of mutations in the proviral genome, along with a deamination-independent mechanism that works prior to the proviral integration, together exert efficient antiretroviral effects in infected target cells. Selectively targets single-stranded DNA and does not deaminate double-stranded DNA or single- or double-stranded RNA. This Macaca mulatta (Rhesus macaque) protein is DNA dC-&gt;dU-editing enzyme APOBEC-3H.